The following is a 276-amino-acid chain: MALVKTKPTSPGRRSMVKVVNKDLHKGAPHAPLLEKQFQKSGRNNNGHITTRHKGGGHKHHYRVVDFKRNDKDGIAAKVERLEYDPNRSANIALVLFADGERRYIIATKGMVAGQALLNGAEAPIKAGNNLPIRNIPVGTTINNVEILPGKGAQVARAAGGSAVLLAREGLYAQVRLRSGEVRRVHIECRATIGEVGNEEHSLRVIGKAGATRWRGIRPTVRGVVMNPVDHPHGGGEGKTAAGRDPVSPWGTPAKGYRTRSNKRTDSMIVQKRHKR.

Disordered regions lie at residues Q37–K59 and V225–R276. Positions Q39–I49 are enriched in polar residues. A compositionally biased stretch (basic residues) spans T50–K59.

The protein belongs to the universal ribosomal protein uL2 family. Part of the 50S ribosomal subunit. Forms a bridge to the 30S subunit in the 70S ribosome.

In terms of biological role, one of the primary rRNA binding proteins. Required for association of the 30S and 50S subunits to form the 70S ribosome, for tRNA binding and peptide bond formation. It has been suggested to have peptidyltransferase activity; this is somewhat controversial. Makes several contacts with the 16S rRNA in the 70S ribosome. This is Large ribosomal subunit protein uL2 from Cupriavidus pinatubonensis (strain JMP 134 / LMG 1197) (Cupriavidus necator (strain JMP 134)).